The sequence spans 179 residues: ATP synthase subunit b (179 aa).

Residues threonine 27–valine 47 form a helical membrane-spanning segment.

Belongs to the ATPase B chain family. In terms of assembly, F-type ATPases have 2 components, F(1) - the catalytic core - and F(0) - the membrane proton channel. F(1) has five subunits: alpha(3), beta(3), gamma(1), delta(1), epsilon(1). F(0) has three main subunits: a(1), b(2) and c(10-14). The alpha and beta chains form an alternating ring which encloses part of the gamma chain. F(1) is attached to F(0) by a central stalk formed by the gamma and epsilon chains, while a peripheral stalk is formed by the delta and b chains.

The protein resides in the cell inner membrane. F(1)F(0) ATP synthase produces ATP from ADP in the presence of a proton or sodium gradient. F-type ATPases consist of two structural domains, F(1) containing the extramembraneous catalytic core and F(0) containing the membrane proton channel, linked together by a central stalk and a peripheral stalk. During catalysis, ATP synthesis in the catalytic domain of F(1) is coupled via a rotary mechanism of the central stalk subunits to proton translocation. Functionally, component of the F(0) channel, it forms part of the peripheral stalk, linking F(1) to F(0). This Anaeromyxobacter sp. (strain K) protein is ATP synthase subunit b.